Consider the following 133-residue polypeptide: Small ribosomal subunit protein uS8c (133 aa).

The protein belongs to the universal ribosomal protein uS8 family. As to quaternary structure, part of the 30S ribosomal subunit.

The protein localises to the plastid. It localises to the chloroplast. One of the primary rRNA binding proteins, it binds directly to 16S rRNA central domain where it helps coordinate assembly of the platform of the 30S subunit. The polypeptide is Small ribosomal subunit protein uS8c (rps8) (Cyanidium caldarium (Red alga)).